The following is a 271-amino-acid chain: Signal recognition particle receptor subunit beta (271 aa).

A helical membrane pass occupies residues 37 to 57; that stretch reads LLSVVVAVLAVLLTLVFWKLI. GTP is bound by residues 71-79 and 92-95; these read GLCDSGKTL and TQTS. Ser-112 is modified (phosphoserine). Gly-120 contributes to the GTP binding site. Phosphothreonine is present on Thr-214. Residue Ala-248 coordinates GTP.

This sequence belongs to the SRP receptor beta subunit family. Heterodimer with SRPRA.

The protein localises to the endoplasmic reticulum membrane. Its function is as follows. Component of the signal recognition particle (SRP) complex receptor (SR). Ensures, in conjunction with the SRP complex, the correct targeting of the nascent secretory proteins to the endoplasmic reticulum membrane system. May mediate the membrane association of SR. In Homo sapiens (Human), this protein is Signal recognition particle receptor subunit beta (SRPRB).